A 387-amino-acid polypeptide reads, in one-letter code: Exodeoxyribonuclease 7 large subunit (387 aa).

It belongs to the XseA family. As to quaternary structure, heterooligomer composed of large and small subunits.

The protein localises to the cytoplasm. The enzyme catalyses Exonucleolytic cleavage in either 5'- to 3'- or 3'- to 5'-direction to yield nucleoside 5'-phosphates.. In terms of biological role, bidirectionally degrades single-stranded DNA into large acid-insoluble oligonucleotides, which are then degraded further into small acid-soluble oligonucleotides. This Synechococcus sp. (strain CC9902) protein is Exodeoxyribonuclease 7 large subunit.